Consider the following 498-residue polypeptide: Hexokinase-1 (498 aa).

Positions 39 to 492 constitute a Hexokinase domain; the sequence is AAAQRVVAEL…SGLGAALVAA (454 aa). A hexokinase small subdomain region spans residues 95 to 233; it reads TGGEEGSYYA…GLDMRVSALI (139 aa). ADP is bound by residues Gly-109, Thr-110, and Asn-111. D-glucose is bound by residues Thr-199, Lys-200, Asn-234, and Asp-235. The interval 234–481 is hexokinase large subdomain; it reads NDTVGTLAAG…ERVVVKLASD (248 aa). Thr-258 lines the ADP pocket. Positions 261, 290, and 321 each coordinate D-glucose. Gly-446 provides a ligand contact to ADP.

It belongs to the hexokinase family. In terms of tissue distribution, highly expressed in senescent leaves.

The catalysed reaction is a D-hexose + ATP = a D-hexose 6-phosphate + ADP + H(+). The enzyme catalyses D-fructose + ATP = D-fructose 6-phosphate + ADP + H(+). It catalyses the reaction D-glucose + ATP = D-glucose 6-phosphate + ADP + H(+). It functions in the pathway carbohydrate metabolism; hexose metabolism. It participates in carbohydrate degradation; glycolysis; D-glyceraldehyde 3-phosphate and glycerone phosphate from D-glucose: step 1/4. Functionally, fructose and glucose phosphorylating enzyme. Acts as a positive regulator of leaf senescence by mediating glucose accumulation and inducing an increase in reactive oxygen species (ROS). The protein is Hexokinase-1 (HXK1) of Oryza sativa subsp. japonica (Rice).